Consider the following 270-residue polypeptide: Esterase (270 aa).

Residues Ser127, Asp216, and His244 each act as charge relay system in the active site.

This sequence belongs to the LovG family.

The protein operates within mycotoxin biosynthesis. In terms of biological role, esterase; part of the gene cluster that mediates the biosynthesis of the selective antifungal agent ascochitine, an o-quinone methide that plays a possible protective role against other microbial competitors in nature and is considered to be important for pathogenicity of legume-associated Didymella species. The pathway probably begins with the synthesis of a keto-aldehyde intermediate by the ascochitine non-reducing polyketide synthase pksAC from successive condensations of 4 malonyl-CoA units, presumably with a simple acetyl-CoA starter unit. Release of the keto-aldehyde intermediate is consistent with the presence of the C-terminal reductive release domain. The HR-PKS (orf7) probably makes a diketide starter unit which is passed to the non-reducing polyketide synthase pksAC for further extension, producing ascochital and ascochitine. The aldehyde dehydrogenase (orf1), the 2-oxoglutarate-dependent dioxygenase (orf3) and the dehydrogenase (orf9) are probably involved in subsequent oxidations of methyl groups to the carboxylic acid of the heterocyclic ring. The ascochitine gene cluster also includes a gene encoding a short peptide with a cupin domain (orf2) that is often found in secondary metabolite gene clusters and which function has still to be determined. In Didymella fabae (Leaf and pod spot disease fungus), this protein is Esterase.